The following is a 272-amino-acid chain: Regulatory protein RecX (272 aa).

Belongs to the RecX family.

The protein localises to the cytoplasm. Modulates RecA activity. The protein is Regulatory protein RecX of Staphylococcus saprophyticus subsp. saprophyticus (strain ATCC 15305 / DSM 20229 / NCIMB 8711 / NCTC 7292 / S-41).